Reading from the N-terminus, the 379-residue chain is Alanine racemase (379 aa).

Residue Lys-41 is the Proton acceptor; specific for D-alanine of the active site. Lys-41 carries the post-translational modification N6-(pyridoxal phosphate)lysine. Arg-138 is a binding site for substrate. Tyr-260 acts as the Proton acceptor; specific for L-alanine in catalysis. Met-319 is a substrate binding site.

It belongs to the alanine racemase family. Pyridoxal 5'-phosphate serves as cofactor.

It catalyses the reaction L-alanine = D-alanine. Its pathway is amino-acid biosynthesis; D-alanine biosynthesis; D-alanine from L-alanine: step 1/1. Catalyzes the interconversion of L-alanine and D-alanine. May also act on other amino acids. The chain is Alanine racemase (alr) from Rhizobium meliloti (strain 1021) (Ensifer meliloti).